We begin with the raw amino-acid sequence, 152 residues long: 3-hydroxyacyl-[acyl-carrier-protein] dehydratase FabZ (152 aa).

The active site involves histidine 58.

It belongs to the thioester dehydratase family. FabZ subfamily.

It is found in the cytoplasm. The catalysed reaction is a (3R)-hydroxyacyl-[ACP] = a (2E)-enoyl-[ACP] + H2O. Its function is as follows. Involved in unsaturated fatty acids biosynthesis. Catalyzes the dehydration of short chain beta-hydroxyacyl-ACPs and long chain saturated and unsaturated beta-hydroxyacyl-ACPs. The chain is 3-hydroxyacyl-[acyl-carrier-protein] dehydratase FabZ from Prochlorococcus marinus (strain MIT 9515).